The chain runs to 241 residues: Methylthioribulose-1-phosphate dehydratase (241 aa).

Polar residues predominate over residues 1–17 (MAKQVENNNNDHLVQST). Residues 1 to 21 (MAKQVENNNNDHLVQSTDPEH) are disordered. C100 lines the substrate pocket. Positions 117 and 119 each coordinate Zn(2+). E146 serves as the catalytic Proton donor/acceptor. H202 provides a ligand contact to Zn(2+).

Belongs to the aldolase class II family. MtnB subfamily. The cofactor is Zn(2+).

It localises to the cytoplasm. The enzyme catalyses 5-(methylsulfanyl)-D-ribulose 1-phosphate = 5-methylsulfanyl-2,3-dioxopentyl phosphate + H2O. The protein operates within amino-acid biosynthesis; L-methionine biosynthesis via salvage pathway; L-methionine from S-methyl-5-thio-alpha-D-ribose 1-phosphate: step 2/6. Functionally, catalyzes the dehydration of methylthioribulose-1-phosphate (MTRu-1-P) into 2,3-diketo-5-methylthiopentyl-1-phosphate (DK-MTP-1-P). The protein is Methylthioribulose-1-phosphate dehydratase of Aspergillus flavus (strain ATCC 200026 / FGSC A1120 / IAM 13836 / NRRL 3357 / JCM 12722 / SRRC 167).